The primary structure comprises 119 residues: Large ribosomal subunit protein uL18 (119 aa).

Belongs to the universal ribosomal protein uL18 family. In terms of assembly, part of the 50S ribosomal subunit; part of the 5S rRNA/L5/L18/L25 subcomplex. Contacts the 5S and 23S rRNAs.

Its function is as follows. This is one of the proteins that bind and probably mediate the attachment of the 5S RNA into the large ribosomal subunit, where it forms part of the central protuberance. In Cereibacter sphaeroides (strain ATCC 17025 / ATH 2.4.3) (Rhodobacter sphaeroides), this protein is Large ribosomal subunit protein uL18.